Reading from the N-terminus, the 424-residue chain is Vasopressin V1a receptor (424 aa).

The interval 1–40 is disordered; the sequence is MSFPRGSQDRSVGNSSPWWPLTTEGSNGSQEAARLGEGDS. The Extracellular portion of the chain corresponds to 1–52; sequence MSFPRGSQDRSVGNSSPWWPLTTEGSNGSQEAARLGEGDSPLGDVRNEELAK. The span at 9-30 shows a compositional bias: polar residues; the sequence is DRSVGNSSPWWPLTTEGSNGSQ. N-linked (GlcNAc...) asparagine glycosylation occurs at Asn27. The chain crosses the membrane as a helical span at residues 53-76; it reads LEIAVLAVIFVVAVLGNSSVLLAL. At 77 to 88 the chain is on the cytoplasmic side; the sequence is HRTPRKTSRMHL. Residues 89–110 form a helical membrane-spanning segment; it reads FIRHLSLADLAVAFFQVLPQLC. Over 111-125 the chain is Extracellular; sequence WDITYRFRGPDWLCR. Residues Cys124 and Cys205 are joined by a disulfide bond. A helical membrane pass occupies residues 126 to 147; it reads VVKHLQVFAMFASAYMLVVMTA. Residues 148-168 lie on the Cytoplasmic side of the membrane; that stretch reads DRYIAVCHPLKTLQQPARRSR. The chain crosses the membrane as a helical span at residues 169 to 190; it reads LMIATSWVLSFILSTPQYFIFS. Residues 191–220 lie on the Extracellular side of the membrane; sequence VIEIEVNNGTKTQDCWATFIQPWGTRAYVT. The chain crosses the membrane as a helical span at residues 221–241; it reads WMTSGVFVAPVVVLGTCYGFI. At 242-299 the chain is on the cytoplasmic side; the sequence is CYHIWRNIRGKTASSRHSKGDKGSGEAVGPFHKGLLVTPCVSSVKSISRAKIRTVKMT. A helical transmembrane segment spans residues 300–319; the sequence is FVIVSAYILCWAPFFIVQMW. Over 320–337 the chain is Extracellular; sequence SVWDENFIWTDSENPSIT. A helical transmembrane segment spans residues 338–357; sequence ITALLASLNSCCNPWIYMFF. The Cytoplasmic portion of the chain corresponds to 358–424; it reads SGHLLQDCVQ…KSIRFIPVST (67 aa). 2 S-palmitoyl cysteine lipidation sites follow: Cys371 and Cys372. Residues 383-416 form a disordered region; it reads DSDSMSRRQTSYSNNRSPTNSTGMWKDSPKSSKS. Over residues 389-405 the composition is skewed to polar residues; sequence RRQTSYSNNRSPTNSTG. The residue at position 410 (Ser410) is a Phosphoserine.

The protein belongs to the G-protein coupled receptor 1 family. Vasopressin/oxytocin receptor subfamily. Palmitoylated on three cysteine residues, of which only two are identified. In terms of tissue distribution, localized within gonadotropes of the anterior pituitary of the brain. Broadly distributed throughout the cerebral cortex.

The protein localises to the cell membrane. It localises to the cytoplasmic vesicle membrane. In terms of biological role, receptor for arginine vasopressin. The activity of this receptor is mediated by G proteins which activate a phosphatidyl-inositol-calcium second messenger system. Involved in social memory formation. The protein is Vasopressin V1a receptor (Avpr1a) of Rattus norvegicus (Rat).